The sequence spans 221 residues: MLRAALSGSSYVGVFATATDEYLLVRPDIEESLQSEFETELDVTAVPTTIAGSGTVGSLAVGNENGLLVTERVTDRERDRLETETGLPVVELPGNINAAGNVVLANNEGAFVHPDLSRDALSAIEEALSVPVERGRIADVQTVGTAAVVTDDGVLSHPKTTDEKLDFLEELFGVYADIGTINYGGPLVGSGLVANNTGYIAGEETTGPELGRIEDALGFIQ.

This sequence belongs to the eIF-6 family.

Binds to the 50S ribosomal subunit and prevents its association with the 30S ribosomal subunit to form the 70S initiation complex. In Natronomonas pharaonis (strain ATCC 35678 / DSM 2160 / CIP 103997 / JCM 8858 / NBRC 14720 / NCIMB 2260 / Gabara) (Halobacterium pharaonis), this protein is Translation initiation factor 6.